Reading from the N-terminus, the 616-residue chain is Alpha terpineol synthase, chloroplastic (616 aa).

The transit peptide at 1–41 (MALLSVAPLQKPLTSCSPFSTTMPTLGVCTPRKVVTPSIIM) directs the protein to the chloroplast. Mg(2+) contacts are provided by aspartate 367, aspartate 371, and aspartate 519. The short motif at 367–371 (DDIYD) is the DDXXD motif element.

The protein belongs to the terpene synthase family. Tpsd subfamily. It depends on Mg(2+) as a cofactor. Mn(2+) is required as a cofactor.

It localises to the plastid. The protein localises to the chloroplast. It carries out the reaction (2E)-geranyl diphosphate + H2O = (S)-alpha-terpineol + diphosphate. It catalyses the reaction (2E)-geranyl diphosphate + H2O = 1,8-cineole + diphosphate. The catalysed reaction is (2E)-geranyl diphosphate = beta-myrcene + diphosphate. The enzyme catalyses (2E)-geranyl diphosphate = (1S,5S)-sabinene + diphosphate. The protein operates within terpene metabolism; oleoresin biosynthesis. It functions in the pathway secondary metabolite biosynthesis; terpenoid biosynthesis. Its function is as follows. Monoterpene synthase (TPS) involved in the biosynthesis of monoterpene natural products included in conifer oleoresin secretions and volatile emissions; these compounds contribute to biotic and abiotic stress defense against herbivores and pathogens. Catalyzes the conversion of (2E)-geranyl diphosphate (GPP) to alpha-terpineol and, to a lower extent, to 1,8-cineole, myrcene and (-)-sabinene. The chain is Alpha terpineol synthase, chloroplastic from Pinus contorta (Shore pine).